Reading from the N-terminus, the 69-residue chain is uncharacterized protein (69 aa).

Residues 21-64 (LNLLKGGEEKISEVELKLDEMEKKMDSLLVQLEDLHRDNNDLAK) are a coiled coil.

This is an uncharacterized protein from Saccharomyces cerevisiae (strain ATCC 204508 / S288c) (Baker's yeast).